A 281-amino-acid polypeptide reads, in one-letter code: uncharacterized protein (281 aa).

It localises to the plastid. The protein resides in the chloroplast. This is an uncharacterized protein from Euglena gracilis.